Consider the following 98-residue polypeptide: Protein translation factor SUI1 homolog (98 aa).

This sequence belongs to the SUI1 family.

The polypeptide is Protein translation factor SUI1 homolog (Thermococcus kodakarensis (strain ATCC BAA-918 / JCM 12380 / KOD1) (Pyrococcus kodakaraensis (strain KOD1))).